Here is a 250-residue protein sequence, read N- to C-terminus: Ribonuclease HII (250 aa).

Residues 66-250 enclose the RNase H type-2 domain; it reads QLVAGVDEVG…TFAPVSDFFK (185 aa). The a divalent metal cation site is built by aspartate 72, glutamate 73, and aspartate 164.

This sequence belongs to the RNase HII family. Mn(2+) serves as cofactor. It depends on Mg(2+) as a cofactor.

The protein resides in the cytoplasm. The catalysed reaction is Endonucleolytic cleavage to 5'-phosphomonoester.. In terms of biological role, endonuclease that specifically degrades the RNA of RNA-DNA hybrids. The polypeptide is Ribonuclease HII (Lactobacillus acidophilus (strain ATCC 700396 / NCK56 / N2 / NCFM)).